The primary structure comprises 491 residues: Subtilase-type proteinase RRT12 (491 aa).

An N-terminal signal peptide occupies residues 1-17; it reads MKPQCILISLLVNLAYA. 4 N-linked (GlcNAc...) asparagine glycosylation sites follow: Asn-38, Asn-64, Asn-106, and Asn-121. A Peptidase S8 domain is found at 142–442; the sequence is PFDVGDKDRY…FPRLNIEAIA (301 aa). Catalysis depends on charge relay system residues Asp-174 and His-205. N-linked (GlcNAc...) asparagine glycans are attached at residues Asn-268 and Asn-356. Ser-365 serves as the catalytic Charge relay system. Asn-449 is a glycosylation site (N-linked (GlcNAc...) asparagine).

The protein belongs to the peptidase S8 family. Post-translationally, N-glycosylated.

It is found in the spore wall. Subtilisin-related protease involved in the formation of a protective dityrosine layer required for spore wall assembly. Identified in a screen for mutants with increased levels of rDNA transcription. This chain is Subtilase-type proteinase RRT12 (RRT12), found in Saccharomyces cerevisiae (strain ATCC 204508 / S288c) (Baker's yeast).